The primary structure comprises 280 residues: 4-deoxy-L-threo-5-hexosulose-uronate ketol-isomerase 1 (280 aa).

The Zn(2+) site is built by histidine 198, histidine 200, glutamate 205, and histidine 247.

It belongs to the KduI family. Requires Zn(2+) as cofactor.

The enzyme catalyses 5-dehydro-4-deoxy-D-glucuronate = 3-deoxy-D-glycero-2,5-hexodiulosonate. Its pathway is glycan metabolism; pectin degradation; 2-dehydro-3-deoxy-D-gluconate from pectin: step 4/5. Its function is as follows. Catalyzes the isomerization of 5-dehydro-4-deoxy-D-glucuronate to 3-deoxy-D-glycero-2,5-hexodiulosonate. This Rhizobium meliloti (strain 1021) (Ensifer meliloti) protein is 4-deoxy-L-threo-5-hexosulose-uronate ketol-isomerase 1 (kduI1).